A 476-amino-acid chain; its full sequence is Vitamin D-binding protein (476 aa).

Positions 1-16 (MKRVLVLLLALAFGHA) are cleaved as a signal peptide. 3 consecutive Albumin domains span residues 17-208 (LERG…QMKQ), 209-394 (LLLL…LMKR), and 395-476 (QLTS…ILQS). Disulfide bonds link Cys29–Cys75, Cys74–Cys83, Cys96–Cys112, Cys111–Cys122, Cys145–Cys190, Cys189–Cys198, Cys220–Cys266, Cys265–Cys273, Cys286–Cys300, Cys299–Cys311, Cys335–Cys376, Cys375–Cys384, Cys407–Cys453, and Cys452–Cys462. A glycan (N-linked (GlcNAc...) asparagine) is linked at Asn288. Ser434 bears the Phosphoserine mark.

This sequence belongs to the ALB/AFP/VDB family. As to quaternary structure, associates with membrane-bound immunoglobulin on the surface of B-lymphocytes and with IgG Fc receptor on the membranes of T-lymphocytes. Interacts with LRP2; the interaction is required for renal uptake of GC in complex with 25-hydroxyvitamin D3.

The protein resides in the secreted. Functionally, involved in vitamin D transport and storage, scavenging of extracellular G-actin, enhancement of the chemotactic activity of C5 alpha for neutrophils in inflammation and macrophage activation. The polypeptide is Vitamin D-binding protein (Gc) (Rattus norvegicus (Rat)).